A 302-amino-acid chain; its full sequence is Myeloid-associated differentiation marker-like protein 2 (302 aa).

MARVEL domains are found at residues 13-149 (AIWS…AKPG) and 154-298 (YMAT…RLRI). The next 7 helical transmembrane spans lie at 45–65 (AYGTFCVFVWAFCFALTILIV), 87–107 (AYAMLATLMTLTAAVIYPMYF), 124–144 (LAVSVCAALLFVTYAVEVFLT), 158–178 (ASGLLKVVQAFVACVIFGALA), 191–211 (WCVAVYSFCFGVTMVVVILNI), 225–245 (FVVIYTVLAILMYISAAVIWP), and 273–293 (LAVTIFTHINLILYIADLIYT).

Belongs to the MAL family.

The protein resides in the membrane. The protein is Myeloid-associated differentiation marker-like protein 2 (myadml2) of Xenopus laevis (African clawed frog).